Reading from the N-terminus, the 529-residue chain is MGLSHKERREYGRSYKRDNNRTAPFSCWPRWIRPGGWSGHGGMSGTTRTGVTARLAFWGGWLSPCLSRAGEKPSCVRTSTRTQIITCCSRLTCSGLPGARAGWLSGLCWRGSGVLLLDGHFAAADEAVNRKLNRRAGAQPATGEMTDVRQPAFRGAGTVNALARFFHGRGPETAGVFLGKDEQGEPVLVPRDTWRKTNIQILGLPGSGKSVMATNALIRSVRDFGDAVVYFDQRGPVAALLPAHCPNFTLLDLRPGKPAQLNLFRDLDQYALKNLLVAGFNLSETGHVADHYRISEQKAAKLIAEQVSAGGKHSAGAGGGVRAAGGPEKGREGADHQAGERGRPERPADGQRHRRGGDNQRRRLLYVIGSMDDEAVIRVQKMLFARCAQIIIARDEFRRWPHASIMLDEIKYLLSKYVLNALGTVRSRDCNLRLAHHAGRLRAAGQDLPADFVKTTVLDNTPIRWFYRAASQESRSGAGQTGEIRVDVERRGPAGRRGTWSISAGTASSRRSRPLFDVNTLQHLLTGSR.

Residues 311–356 (GKHSAGAGGGVRAAGGPEKGREGADHQAGERGRPERPADGQRHRRG) form a disordered region. A compositionally biased stretch (basic and acidic residues) spans 328–356 (EKGREGADHQAGERGRPERPADGQRHRRG).

Its function is as follows. This protein is essential to promote the specific transfer of the plasmid in the presence of conjugative plasmids. This is Mobilization protein A (mobA) from Escherichia coli.